A 217-amino-acid polypeptide reads, in one-letter code: Phosphoribosylformylglycinamidine synthase subunit PurQ (217 aa).

A Glutamine amidotransferase type-1 domain is found at 2–217 (SIGVLVFPGS…GRVLLQGLLS (216 aa)). Catalysis depends on Cys86, which acts as the Nucleophile. Catalysis depends on residues His194 and Glu196.

As to quaternary structure, part of the FGAM synthase complex composed of 1 PurL, 1 PurQ and 2 PurS subunits.

It localises to the cytoplasm. The catalysed reaction is N(2)-formyl-N(1)-(5-phospho-beta-D-ribosyl)glycinamide + L-glutamine + ATP + H2O = 2-formamido-N(1)-(5-O-phospho-beta-D-ribosyl)acetamidine + L-glutamate + ADP + phosphate + H(+). The enzyme catalyses L-glutamine + H2O = L-glutamate + NH4(+). The protein operates within purine metabolism; IMP biosynthesis via de novo pathway; 5-amino-1-(5-phospho-D-ribosyl)imidazole from N(2)-formyl-N(1)-(5-phospho-D-ribosyl)glycinamide: step 1/2. Functionally, part of the phosphoribosylformylglycinamidine synthase complex involved in the purines biosynthetic pathway. Catalyzes the ATP-dependent conversion of formylglycinamide ribonucleotide (FGAR) and glutamine to yield formylglycinamidine ribonucleotide (FGAM) and glutamate. The FGAM synthase complex is composed of three subunits. PurQ produces an ammonia molecule by converting glutamine to glutamate. PurL transfers the ammonia molecule to FGAR to form FGAM in an ATP-dependent manner. PurS interacts with PurQ and PurL and is thought to assist in the transfer of the ammonia molecule from PurQ to PurL. The polypeptide is Phosphoribosylformylglycinamidine synthase subunit PurQ (Parasynechococcus marenigrum (strain WH8102)).